Here is a 243-residue protein sequence, read N- to C-terminus: Pyridoxine 5'-phosphate synthase (243 aa).

N9 is a 3-amino-2-oxopropyl phosphate binding site. 11–12 provides a ligand contact to 1-deoxy-D-xylulose 5-phosphate; the sequence is DH. R20 provides a ligand contact to 3-amino-2-oxopropyl phosphate. H45 (proton acceptor) is an active-site residue. 2 residues coordinate 1-deoxy-D-xylulose 5-phosphate: R47 and H52. The active-site Proton acceptor is E72. T102 is a binding site for 1-deoxy-D-xylulose 5-phosphate. H193 serves as the catalytic Proton donor. 3-amino-2-oxopropyl phosphate is bound by residues G194 and 215–216; that span reads GH.

This sequence belongs to the PNP synthase family. In terms of assembly, homooctamer; tetramer of dimers.

The protein resides in the cytoplasm. It carries out the reaction 3-amino-2-oxopropyl phosphate + 1-deoxy-D-xylulose 5-phosphate = pyridoxine 5'-phosphate + phosphate + 2 H2O + H(+). The protein operates within cofactor biosynthesis; pyridoxine 5'-phosphate biosynthesis; pyridoxine 5'-phosphate from D-erythrose 4-phosphate: step 5/5. Functionally, catalyzes the complicated ring closure reaction between the two acyclic compounds 1-deoxy-D-xylulose-5-phosphate (DXP) and 3-amino-2-oxopropyl phosphate (1-amino-acetone-3-phosphate or AAP) to form pyridoxine 5'-phosphate (PNP) and inorganic phosphate. The protein is Pyridoxine 5'-phosphate synthase of Shigella dysenteriae serotype 1 (strain Sd197).